The primary structure comprises 360 residues: Phenylalanine--tRNA ligase alpha subunit (360 aa).

Mg(2+) is bound at residue Glu260.

This sequence belongs to the class-II aminoacyl-tRNA synthetase family. Phe-tRNA synthetase alpha subunit type 1 subfamily. As to quaternary structure, tetramer of two alpha and two beta subunits. Mg(2+) serves as cofactor.

It localises to the cytoplasm. It catalyses the reaction tRNA(Phe) + L-phenylalanine + ATP = L-phenylalanyl-tRNA(Phe) + AMP + diphosphate + H(+). This chain is Phenylalanine--tRNA ligase alpha subunit, found in Rhodopseudomonas palustris (strain ATCC BAA-98 / CGA009).